The following is a 417-amino-acid chain: Interferon-gamma-inducible GTPase 10 (417 aa).

A lipid anchor (N-myristoyl glycine) is attached at G2. The 183-residue stretch at 67–249 (APLNIAVTGE…PSLESTLLEE (183 aa)) folds into the IRG-type G domain. GDP-binding residues include G78, A79, S82, T83, S101, K183, D185, and S231. The next 2 membrane-spanning stretches (helical) occupy residues 284-302 (EALKAGASATIPMMSFFND) and 370-387 (AVTGGFVATGLYFRKSYY).

This sequence belongs to the TRAFAC class dynamin-like GTPase superfamily. GB1/RHD3 GTPase family. GB1 subfamily. As to quaternary structure, homooligomer; homooligomerization occurs upon GTP-binding and is required for the association with membranous structures. Homodimer; GDP-binding induces formation of an inactive head-to-head homodimer. In terms of processing, myristoylation is required for localization to pathogen-containing vacuoles. Post-translationally, (Microbial infection) Phosphorylated by Toxoplasma gondii ROP18.

Its subcellular location is the membrane. The protein resides in the cytoplasmic vesicle membrane. The catalysed reaction is GTP + H2O = GDP + phosphate + H(+). Its function is as follows. Interferon (IFN)-inducible GTPase that plays important roles in innate immunity against a diverse range of bacterial, viral and protozoan pathogens by mediating cytosolic release of pathogenic ligands that activate the inflammasomes. Following infection, recruited to the membrane of pathogens in a GBP-dependent manner and mediates disruption of the pathogen membrane, liberating ligands that are detected by inflammasomes, such as lipopolysaccharide (LPS) that activates the non-canonical CASP4/CASP11 inflammasome or double-stranded DNA (dsDNA) that activates the AIM2 inflammasome. Promotes AIM2 and NLRP3 inflammasome activation following A.fumigatus infection by liberating beta-glucan, which directly triggers inflammasome assembly. Promotes NLRP3 inflammasome activation following influenza A virus infection. This Mus musculus (Mouse) protein is Interferon-gamma-inducible GTPase 10.